Consider the following 226-residue polypeptide: Charged multivesicular body protein 4 (226 aa).

Positions 22–88 form a coiled coil; that stretch reads IQKLRETENM…DGTLSTIEMQ (67 aa). Residues 169-226 are disordered; that stretch reads QENFDKEIIGIPEPTPTLPEAPTEDLPEKAKEKKKATTTTAVEDDDDPDMKQLLSWSN.

It belongs to the SNF7 family. As to quaternary structure, homopolymer; forms elongated striated filaments of uniform ~10nm width. Monomers interact in a staggered arrangement mediated by complementary charged electrostatic surfaces. Interacts with l(2)gd1 (via DM14 domains 1 and 3); the interaction is direct and blocks access to the surface involved in homopolymerization. This interaction may be required for the ESCRT-III complex role in multivesicular body formation. Expressed at considerably higher levels in testis than in ovary. Expressed in midgut, eye, mouthparts and male accessory gland.

The protein resides in the endosome. The protein localises to the multivesicular body. Its subcellular location is the midbody. May be regulated by aurB/Aurora kinase B-dependent phosphorylation. Functionally, probable core polymerisation component of the endosomal sorting required for transport (ESCRT) III complex involved in multiple cellular processes requiring the outward bending of membranes, including vesicle budding, membrane repair and cytokinesis. The ESCRT pathway involves 4 complexes (ESCRT-0, -I, -II and -III) that sequentially assemble on the cytoplasmic side of membranes and induce membrane remodeling, budding and scission. As part of the ESCRT-III complex, involved in the budding of intraluminal vesicles (ILVs) into endosomes to form multivesicular bodies (MVBs), which target their contents for degradation via the endolysosomal pathway. Involved in regulation of signal transduction pathways, including the Notch and BMP/decapentaplegic (dpp) pathways, by sequestering the intracellular domains of activated receptors into ILVs, isolating them from the cytoplasm and targeting them for lysosomal degradation. Involved in targeting ubiquitilated proteins, such as mono-ubiquitilanated N/Notch, to MVBs for degradation. Plays a role in wing development by regulating Notch signaling. Involved in abscission of germline cells during oogenesis. Involved in spermiogenesis. Required for efficient cytoplasmic isolation and abscission during cytokinesis of epithelial sensory organ precursor cells. May be involved in septate junction remodeling and maintenance. The chain is Charged multivesicular body protein 4 from Drosophila melanogaster (Fruit fly).